Reading from the N-terminus, the 366-residue chain is 3-dehydroquinate synthase (366 aa).

NAD(+) contacts are provided by residues 69 to 74 (DGEAFK), 103 to 107 (GVIGD), 127 to 128 (TT), lysine 140, and lysine 149. Residues glutamate 182, histidine 245, and histidine 262 each coordinate Zn(2+).

The protein belongs to the sugar phosphate cyclases superfamily. Dehydroquinate synthase family. It depends on Co(2+) as a cofactor. The cofactor is Zn(2+). NAD(+) serves as cofactor.

It localises to the cytoplasm. It catalyses the reaction 7-phospho-2-dehydro-3-deoxy-D-arabino-heptonate = 3-dehydroquinate + phosphate. It functions in the pathway metabolic intermediate biosynthesis; chorismate biosynthesis; chorismate from D-erythrose 4-phosphate and phosphoenolpyruvate: step 2/7. Functionally, catalyzes the conversion of 3-deoxy-D-arabino-heptulosonate 7-phosphate (DAHP) to dehydroquinate (DHQ). This chain is 3-dehydroquinate synthase, found in Pseudomonas fluorescens (strain Pf0-1).